A 582-amino-acid polypeptide reads, in one-letter code: Colicin-E9 (582 aa).

Disordered stretches follow at residues 1–74, 246–270, 294–321, 422–489, and 510–542; these read MSGG…SGGG, SPGV…NTRD, PDQV…EAAE, ADAA…IADK, and SKDP…QQVG. Gly residues predominate over residues 20–35; the sequence is INGGPTGIGVSGGASD. The segment covering 36–45 has biased composition (low complexity); the sequence is GSGWSSENNP. Residues 46–74 are compositionally biased toward gly residues; sequence WGGGSGSGIHWGGGSGRGNGGGNGNSGGG. Composition is skewed to basic and acidic residues over residues 297 to 321, 430 to 453, and 465 to 476; these read VKQR…EAAE, QERR…ESKR, and PVGDKWLDDAGK. Residues 516–529 are compositionally biased toward low complexity; the sequence is SKNLNPSNKSSVSK. The Zn(2+) site is built by histidine 550, histidine 575, and histidine 579.

This sequence belongs to the colicin/pyosin nuclease family.

Its function is as follows. This plasmid-coded bactericidal protein is an endonuclease active on both single- and double-stranded DNA but with undefined specificity. Functionally, colicins are polypeptide toxins produced by and active against E.coli and closely related bacteria. This chain is Colicin-E9 (col), found in Escherichia coli.